The primary structure comprises 243 residues: Small ribosomal subunit protein uS2 (243 aa).

This sequence belongs to the universal ribosomal protein uS2 family.

The protein is Small ribosomal subunit protein uS2 of Aliivibrio salmonicida (strain LFI1238) (Vibrio salmonicida (strain LFI1238)).